Reading from the N-terminus, the 786-residue chain is Endonuclease MutS2 (786 aa).

ATP is bound at residue G332–T339. The Smr domain maps to V710–K785.

The protein belongs to the DNA mismatch repair MutS family. MutS2 subfamily. Homodimer. Binds to stalled ribosomes, contacting rRNA.

In terms of biological role, endonuclease that is involved in the suppression of homologous recombination and thus may have a key role in the control of bacterial genetic diversity. Functionally, acts as a ribosome collision sensor, splitting the ribosome into its 2 subunits. Detects stalled/collided 70S ribosomes which it binds and splits by an ATP-hydrolysis driven conformational change. Acts upstream of the ribosome quality control system (RQC), a ribosome-associated complex that mediates the extraction of incompletely synthesized nascent chains from stalled ribosomes and their subsequent degradation. Probably generates substrates for RQC. This chain is Endonuclease MutS2, found in Clostridium beijerinckii (strain ATCC 51743 / NCIMB 8052) (Clostridium acetobutylicum).